Consider the following 83-residue polypeptide: U25-theraphotoxin-Cg1a (83 aa).

The first 23 residues, 1–23 (MRFHTLLFLSFLLLVSCALICTA), serve as a signal peptide directing secretion. Positions 24 to 48 (QHPGLKKSGMFHENVGKGQHIEKKR) are excised as a propeptide. Disulfide bonds link cysteine 50–cysteine 66, cysteine 57–cysteine 71, and cysteine 65–cysteine 81.

This sequence belongs to the neurotoxin 07 (Beta/delta-agtx) family. 03 (aga-4) subfamily. JZTX sub-subfamily. In terms of tissue distribution, expressed by the venom gland.

It localises to the secreted. In terms of biological role, inhibits TTX-sensitive sodium currents in rat dorsal root ganglion (DRG) neurons. The polypeptide is U25-theraphotoxin-Cg1a (Chilobrachys guangxiensis (Chinese earth tiger tarantula)).